The following is a 453-amino-acid chain: Serine/threonine-protein phosphatase 2A regulatory subunit B'' subunit gamma (453 aa).

EF-hand domains lie at 273 to 308 and 341 to 376; these read PSAL…TMTN and KEPA…IQEL. Residues Asp-286, Asp-288, Asn-290, Met-292, and Glu-297 each coordinate Ca(2+).

Interacts with MCM3AP/GANP. Interacts with PPP5C, and the phosphatase 2A core enzyme composed of the PPP2CA catalytic subunit and the constant regulatory subunit PPP2R1A. Finds in a complex with ABCB1, TFPI2 and PPP2R3C; leading to the dephosphorylation of ABCB1. As to expression, ubiquitously expressed in brain and other tissues.

The protein resides in the nucleus. It localises to the cytoplasm. May regulate MCM3AP phosphorylation through phosphatase recruitment. May act as a negative regulator of ABCB1 expression and function through the dephosphorylation of ABCB1 by TFPI2/PPP2R3C complex. May play a role in the activation-induced cell death of B-cells. This is Serine/threonine-protein phosphatase 2A regulatory subunit B'' subunit gamma (PPP2R3C) from Homo sapiens (Human).